The chain runs to 567 residues: Maltase A2 (567 aa).

Positions 1–23 (MPKWAHLGLAALLLISTTQEGTA) are cleaved as a signal peptide. N-linked (GlcNAc...) asparagine glycosylation is found at Asn30, Asn124, and Asn198. Asp226 serves as the catalytic Nucleophile. The active-site Proton donor is the Glu298. The N-linked (GlcNAc...) asparagine glycan is linked to Asn312.

Belongs to the glycosyl hydrolase 13 family.

The enzyme catalyses Hydrolysis of terminal, non-reducing (1-&gt;4)-linked alpha-D-glucose residues with release of alpha-D-glucose.. The polypeptide is Maltase A2 (Mal-A2) (Drosophila melanogaster (Fruit fly)).